A 510-amino-acid chain; its full sequence is Maturase K (510 aa).

It belongs to the intron maturase 2 family. MatK subfamily.

The protein resides in the plastid. The protein localises to the chloroplast. Usually encoded in the trnK tRNA gene intron. Probably assists in splicing its own and other chloroplast group II introns. In Populus alba (White poplar), this protein is Maturase K.